A 429-amino-acid chain; its full sequence is Glutamate-1-semialdehyde 2,1-aminomutase (429 aa).

At Lys267 the chain carries N6-(pyridoxal phosphate)lysine.

It belongs to the class-III pyridoxal-phosphate-dependent aminotransferase family. HemL subfamily. In terms of assembly, homodimer. Pyridoxal 5'-phosphate serves as cofactor.

The protein localises to the cytoplasm. It carries out the reaction (S)-4-amino-5-oxopentanoate = 5-aminolevulinate. Its pathway is porphyrin-containing compound metabolism; protoporphyrin-IX biosynthesis; 5-aminolevulinate from L-glutamyl-tRNA(Glu): step 2/2. The polypeptide is Glutamate-1-semialdehyde 2,1-aminomutase (Xanthomonas axonopodis pv. citri (strain 306)).